A 660-amino-acid polypeptide reads, in one-letter code: ATPase-like fidgetin (660 aa).

Disordered regions lie at residues K141–F186 and A209–K334. A compositionally biased stretch (low complexity) spans S145–S161. Residue S177 is modified to Phosphoserine. A compositionally biased stretch (polar residues) spans D213 to L239. Over residues S240–N255 the composition is skewed to low complexity. The segment covering L301 to R313 has biased composition (polar residues). Residues P314 to S333 are compositionally biased toward low complexity. Residue G419–T426 participates in ATP binding.

This sequence belongs to the AAA ATPase family.

Its subcellular location is the nucleus. This is ATPase-like fidgetin (alf1) from Schizosaccharomyces pombe (strain 972 / ATCC 24843) (Fission yeast).